The sequence spans 161 residues: tRNA-acetylating toxin 1 (161 aa).

The acetyl-CoA site is built by Leu-92, Val-94, His-99, Gly-100, Gly-102, Gly-104, Ala-105, Leu-132, and Glu-135. Residue Tyr-140 is part of the active site. His-142 lines the acetyl-CoA pocket.

The protein belongs to the acetyltransferase family. GNAT subfamily. In terms of assembly, homodimer (in absence of antitoxin). Forms a complex with cognate antitoxin TacA1. Forms a 4:2 antitoxin:toxin complex with cognate antitoxin TacA1.

The enzyme catalyses glycyl-tRNA(Gly) + acetyl-CoA = N-acetylglycyl-tRNA(Gly) + CoA + H(+). Its function is as follows. Toxic component of a type II toxin-antitoxin (TA) system. Acetylates tRNA and inhibits translation, does not acetylate uncharged tRNA. Upon expression in situ acetylates only Gly-tRNA(Gly). In vitro acetylates mainly Gly and Ile/Leu. Upon induction of the toxin gene in lag phase in rich medium (but not mid-exponential phase) the lag phase is extended by several hours, locking bacteria in a non-growth state. Neutralized only by cognate antitoxin TacA1 (A8), but not by TacA2 or TacA3. Its toxic effect is neutralized by expression of peptidyl-tRNA hydrolase (pth) in lag phase. NAD-dependent protein deacylase (cobB) also play a role in detoxifying TacT targets. Expression increases persister cell formation, which is also abolished by either cognate antitoxin or Pth expression. Plays a role in persister cell formation. The TacA1-TacT1 complex binds (and probably represses) its own promoter DNA but not that of tacA3-tacT3, it does not repress the tacA3-tacT3 promoter. This is tRNA-acetylating toxin 1 from Salmonella typhimurium (strain 14028s / SGSC 2262).